The sequence spans 346 residues: Annexin A1 (346 aa).

N-acetylalanine is present on Ala-2. At Ser-5 the chain carries Phosphoserine; by TRPM7. Residue Gln-19 forms an Isoglutamyl lysine isopeptide (Gln-Lys) (interchain with K-?) linkage. Tyr-21 is subject to Phosphotyrosine; by EGFR. Ser-27 is modified (phosphoserine; by PKC). Ser-34 and Ser-37 each carry phosphoserine. The residue at position 41 (Thr-41) is a Phosphothreonine. Annexin repeat units lie at residues 42 to 113 (FNPS…ALLK), 114 to 185 (TPAQ…SLAK), 197 to 269 (DLAD…AIVK), and 273 to 344 (SKPA…ALCG). N6-acetyllysine is present on Lys-58. Residues Gly-59, Val-60, Glu-62, Lys-97, Leu-100, Glu-105, Met-127, Gly-129, Gly-131, Thr-132, and Glu-134 each contribute to the Ca(2+) site. The residue at position 136 (Thr-136) is a Phosphothreonine. Positions 171, 210, and 213 each coordinate Ca(2+). A Glycyl lysine isopeptide (Lys-Gly) (interchain with G-Cter in SUMO1); alternate cross-link involves residue Lys-214. Lys-214 is covalently cross-linked (Glycyl lysine isopeptide (Lys-Gly) (interchain with G-Cter in SUMO2); alternate). Ca(2+) is bound at residue Gly-215. Position 239 is an N6-acetyllysine (Lys-239). Asp-253, Glu-255, and Leu-256 together coordinate Ca(2+). Lys-257 participates in a covalent cross-link: Glycyl lysine isopeptide (Lys-Gly) (interchain with G-Cter in SUMO1). Ca(2+)-binding residues include Glu-261, Met-286, Gly-288, and Gly-290. Lys-312 bears the N6-acetyllysine mark. An intrachain disulfide couples Cys-324 to Cys-343. Ca(2+)-binding residues include Leu-328, Glu-330, and Thr-331. Residue Lys-332 forms a Glycyl lysine isopeptide (Lys-Gly) (interchain with G-Cter in SUMO1) linkage. Ca(2+) is bound at residue Glu-336.

This sequence belongs to the annexin family. In terms of assembly, homodimer; non-covalently linked. Homodimer; linked by transglutamylation. Homodimers linked by transglutamylation are observed in placenta, but not in other tissues. Interacts with S100A11. Heterotetramer, formed by two molecules each of S100A11 and ANXA1. Interacts with DYSF. Interacts with EGFR. Post-translationally, phosphorylated by protein kinase C, EGFR and TRPM7. Phosphorylated in response to EGF treatment. In terms of processing, sumoylated. Proteolytically cleaved by cathepsin CTSG to release the active N-terminal peptide Ac2-26.

Its subcellular location is the nucleus. It localises to the cytoplasm. It is found in the cell projection. The protein resides in the cilium. The protein localises to the basolateral cell membrane. Its subcellular location is the lateral cell membrane. It localises to the cell membrane. It is found in the apical cell membrane. The protein resides in the membrane. The protein localises to the early endosome. Its subcellular location is the cytoplasmic vesicle membrane. It localises to the endosome membrane. It is found in the secreted. The protein resides in the extracellular space. The protein localises to the extracellular exosome. Its subcellular location is the cytoplasmic vesicle. It localises to the secretory vesicle lumen. It is found in the phagocytic cup. Plays important roles in the innate immune response as effector of glucocorticoid-mediated responses and regulator of the inflammatory process. Has anti-inflammatory activity. Plays a role in glucocorticoid-mediated down-regulation of the early phase of the inflammatory response. Contributes to the adaptive immune response by enhancing signaling cascades that are triggered by T-cell activation, regulates differentiation and proliferation of activated T-cells. Promotes the differentiation of T-cells into Th1 cells and negatively regulates differentiation into Th2 cells. Has no effect on unstimulated T-cells. Negatively regulates hormone exocytosis via activation of the formyl peptide receptors and reorganization of the actin cytoskeleton. Has high affinity for Ca(2+) and can bind up to eight Ca(2+) ions. Displays Ca(2+)-dependent binding to phospholipid membranes. Plays a role in the formation of phagocytic cups and phagosomes. Plays a role in phagocytosis by mediating the Ca(2+)-dependent interaction between phagosomes and the actin cytoskeleton. Functionally, functions at least in part by activating the formyl peptide receptors and downstream signaling cascades. Promotes chemotaxis of granulocytes and monocytes via activation of the formyl peptide receptors. Promotes rearrangement of the actin cytoskeleton, cell polarization and cell migration. Promotes resolution of inflammation and wound healing. Acts via neutrophil N-formyl peptide receptors to enhance the release of CXCL2. This Pan troglodytes (Chimpanzee) protein is Annexin A1 (ANXA1).